The sequence spans 813 residues: Protein mac-1 (813 aa).

2 coiled-coil regions span residues 58-89 (VREA…VQEI) and 122-152 (SDDS…TVLN). Disordered stretches follow at residues 97 to 131 (TRKR…ERAA) and 152 to 193 (NLYT…GAVS). The span at 158–172 (SAPSTPVSTPKNQAT) shows a compositional bias: polar residues. The segment covering 175–191 (PPGASAAPPALPRGLGA) has biased composition (low complexity). ATP contacts are provided by residues 246-253 (GPPGCGKT) and 575-582 (GPPGCGKT).

It belongs to the AAA ATPase family. As to quaternary structure, found in a complex composed of ced-3, ced-4 and mac-1 or of ced-9, ced-4 and mac-1. Within the complex, interacts with ced-4.

Probably together with ced-9, plays a modest role in preventing ced-4 and caspase ced-3-mediated apoptosis. The protein is Protein mac-1 of Caenorhabditis elegans.